The following is a 396-amino-acid chain: Putative T-box protein 39 (396 aa).

The segment at residues 11-192 is a DNA-binding region (T-box); sequence MAEEDRWKQW…KNSTYGNRLD (182 aa). The interval 185–215 is disordered; the sequence is STYGNRLDGGNKRKNTDSSEERTSKRSKNET. Positions 193–215 are enriched in basic and acidic residues; sequence GGNKRKNTDSSEERTSKRSKNET.

The protein resides in the nucleus. The chain is Putative T-box protein 39 (tbx-39) from Caenorhabditis elegans.